The primary structure comprises 328 residues: Malate dehydrogenase (328 aa).

11–17 (GAAGQIG) contributes to the NAD(+) binding site. Positions 94 and 100 each coordinate substrate. Residues N107, Q114, and 131–133 (VGN) each bind NAD(+). Residues N133 and R164 each contribute to the substrate site. The active-site Proton acceptor is H189.

Belongs to the LDH/MDH superfamily. MDH type 2 family.

The enzyme catalyses (S)-malate + NAD(+) = oxaloacetate + NADH + H(+). In terms of biological role, catalyzes the reversible oxidation of malate to oxaloacetate. This is Malate dehydrogenase from Xylella fastidiosa (strain 9a5c).